Here is a 247-residue protein sequence, read N- to C-terminus: 5-oxoprolinase subunit A (247 aa).

This sequence belongs to the LamB/PxpA family. Forms a complex composed of PxpA, PxpB and PxpC.

It catalyses the reaction 5-oxo-L-proline + ATP + 2 H2O = L-glutamate + ADP + phosphate + H(+). In terms of biological role, catalyzes the cleavage of 5-oxoproline to form L-glutamate coupled to the hydrolysis of ATP to ADP and inorganic phosphate. The protein is 5-oxoprolinase subunit A of Vibrio vulnificus (strain YJ016).